The sequence spans 334 residues: Holliday junction branch migration complex subunit RuvB (334 aa).

The large ATPase domain (RuvB-L) stretch occupies residues M1–Y182. Residues L21, R22, G63, K66, T67, T68, E129–F131, R172, Y182, and R219 each bind ATP. T67 is a Mg(2+) binding site. A small ATPAse domain (RuvB-S) region spans residues Q183 to Q253. The segment at D256–E334 is head domain (RuvB-H). Residues R292, R311, and R316 each contribute to the DNA site.

This sequence belongs to the RuvB family. Homohexamer. Forms an RuvA(8)-RuvB(12)-Holliday junction (HJ) complex. HJ DNA is sandwiched between 2 RuvA tetramers; dsDNA enters through RuvA and exits via RuvB. An RuvB hexamer assembles on each DNA strand where it exits the tetramer. Each RuvB hexamer is contacted by two RuvA subunits (via domain III) on 2 adjacent RuvB subunits; this complex drives branch migration. In the full resolvosome a probable DNA-RuvA(4)-RuvB(12)-RuvC(2) complex forms which resolves the HJ.

The protein localises to the cytoplasm. It carries out the reaction ATP + H2O = ADP + phosphate + H(+). The RuvA-RuvB-RuvC complex processes Holliday junction (HJ) DNA during genetic recombination and DNA repair, while the RuvA-RuvB complex plays an important role in the rescue of blocked DNA replication forks via replication fork reversal (RFR). RuvA specifically binds to HJ cruciform DNA, conferring on it an open structure. The RuvB hexamer acts as an ATP-dependent pump, pulling dsDNA into and through the RuvAB complex. RuvB forms 2 homohexamers on either side of HJ DNA bound by 1 or 2 RuvA tetramers; 4 subunits per hexamer contact DNA at a time. Coordinated motions by a converter formed by DNA-disengaged RuvB subunits stimulates ATP hydrolysis and nucleotide exchange. Immobilization of the converter enables RuvB to convert the ATP-contained energy into a lever motion, pulling 2 nucleotides of DNA out of the RuvA tetramer per ATP hydrolyzed, thus driving DNA branch migration. The RuvB motors rotate together with the DNA substrate, which together with the progressing nucleotide cycle form the mechanistic basis for DNA recombination by continuous HJ branch migration. Branch migration allows RuvC to scan DNA until it finds its consensus sequence, where it cleaves and resolves cruciform DNA. This Staphylococcus saprophyticus subsp. saprophyticus (strain ATCC 15305 / DSM 20229 / NCIMB 8711 / NCTC 7292 / S-41) protein is Holliday junction branch migration complex subunit RuvB.